The chain runs to 561 residues: Zinc finger protein with KRAB and SCAN domains 1 (561 aa).

The segment at 1 to 51 is disordered; it reads MMTAESRETTGLSPQAAQEKDGIVIVKVEEEDEEDHMWGQDSSLQETPPPD. Phosphoserine is present on serine 13. Lysine 27 is covalently cross-linked (Glycyl lysine isopeptide (Lys-Gly) (interchain with G-Cter in SUMO2)). The SCAN box domain occupies 56-138; that stretch reads RQRFRRFCYQ…TLLEDLELDL (83 aa). Residues 163 to 187 form a disordered region; sequence VQESSSFDHHETAQSHFKHSSRKPR. Residues 178 to 187 show a composition bias toward basic residues; that stretch reads HFKHSSRKPR. Glycyl lysine isopeptide (Lys-Gly) (interchain with G-Cter in SUMO2) cross-links involve residues lysine 180 and lysine 226. A KRAB domain is found at 225 to 304; the sequence is VKIEDMAVSL…QKEFGEKREQ (80 aa). The segment covering 260–275 has biased composition (polar residues); that stretch reads NVFSQGSENRNGNEST. Residues 260–372 are disordered; the sequence is NVFSQGSENR…NTPEEAPSGA (113 aa). Basic and acidic residues-rich tracts occupy residues 276-286 and 294-349; these read SKAEVKEDSTS and FQKE…EKGK. Glycyl lysine isopeptide (Lys-Gly) (interchain with G-Cter in SUMO2) cross-links involve residues lysine 277, lysine 296, lysine 301, and lysine 336. Positions 355–365 are enriched in polar residues; the sequence is FSLSANFNNTP. A Glycyl lysine isopeptide (Lys-Gly) (interchain with G-Cter in SUMO2) cross-link involves residue lysine 373. 6 consecutive C2H2-type zinc fingers follow at residues 375–397, 403–425, 431–453, 459–481, 487–509, and 515–537; these read HRCD…KIIH, YECN…QRIH, HECN…QRIH, YECS…RRIH, and YKCT…HRIH. Glycyl lysine isopeptide (Lys-Gly) (interchain with G-Cter in SUMO2) cross-links involve residues lysine 410, lysine 438, and lysine 476. A Glycyl lysine isopeptide (Lys-Gly) (interchain with G-Cter in SUMO2) cross-link involves residue lysine 558.

The protein belongs to the krueppel C2H2-type zinc-finger protein family.

It is found in the nucleus. May be involved in transcriptional regulation. In Mus musculus (Mouse), this protein is Zinc finger protein with KRAB and SCAN domains 1 (Zkscan1).